We begin with the raw amino-acid sequence, 949 residues long: Glycine dehydrogenase (decarboxylating) (949 aa).

At K704 the chain carries N6-(pyridoxal phosphate)lysine.

The protein belongs to the GcvP family. The glycine cleavage system is composed of four proteins: P, T, L and H. Pyridoxal 5'-phosphate serves as cofactor.

It catalyses the reaction N(6)-[(R)-lipoyl]-L-lysyl-[glycine-cleavage complex H protein] + glycine + H(+) = N(6)-[(R)-S(8)-aminomethyldihydrolipoyl]-L-lysyl-[glycine-cleavage complex H protein] + CO2. Functionally, the glycine cleavage system catalyzes the degradation of glycine. The P protein binds the alpha-amino group of glycine through its pyridoxal phosphate cofactor; CO(2) is released and the remaining methylamine moiety is then transferred to the lipoamide cofactor of the H protein. The chain is Glycine dehydrogenase (decarboxylating) from Bacteroides fragilis (strain ATCC 25285 / DSM 2151 / CCUG 4856 / JCM 11019 / LMG 10263 / NCTC 9343 / Onslow / VPI 2553 / EN-2).